The sequence spans 174 residues: Large ribosomal subunit protein uL16 (174 aa).

Belongs to the universal ribosomal protein uL16 family.

In Methanocaldococcus jannaschii (strain ATCC 43067 / DSM 2661 / JAL-1 / JCM 10045 / NBRC 100440) (Methanococcus jannaschii), this protein is Large ribosomal subunit protein uL16.